The following is a 442-amino-acid chain: C4-dicarboxylate transport protein (442 aa).

A run of 8 helical transmembrane segments spans residues 10–30 (VQVLIAIVLGILVGFLFPSFG), 40–60 (FIKLIKMLIAPIIFATVVSGI), 77–97 (LIYFEVVTTFALVIGLVVANI), 149–169 (LLQVLLISVLFGFALTQLGTL), 185–205 (FVILGFVMRLAPIGAFGAMAF), 221–241 (LMVAFYATCLLFVFVVLGLIA), 288–308 (VVGLVVPAGYSFNLDGTSIYL), and 354–374 (AATLSAVGHVPVAGLALILGI). The segment at 420–442 (PATPEVAAEERGEGRGLDGPLPA) is disordered.

This sequence belongs to the dicarboxylate/amino acid:cation symporter (DAACS) (TC 2.A.23) family.

It is found in the cell membrane. In terms of biological role, responsible for the transport of dicarboxylates such as succinate, fumarate, and malate across the membrane. In Deinococcus geothermalis (strain DSM 11300 / CIP 105573 / AG-3a), this protein is C4-dicarboxylate transport protein.